The primary structure comprises 166 residues: NAD(P)H-quinone oxidoreductase subunit I, chloroplastic (166 aa).

2 consecutive 4Fe-4S ferredoxin-type domains span residues 55–84 (GRIH…VDWK) and 95–124 (LNYS…MTEE). Residues cysteine 64, cysteine 67, cysteine 70, cysteine 74, cysteine 104, cysteine 107, cysteine 110, and cysteine 114 each contribute to the [4Fe-4S] cluster site.

The protein belongs to the complex I 23 kDa subunit family. NDH is composed of at least 16 different subunits, 5 of which are encoded in the nucleus. [4Fe-4S] cluster is required as a cofactor.

It is found in the plastid. The protein resides in the chloroplast thylakoid membrane. The catalysed reaction is a plastoquinone + NADH + (n+1) H(+)(in) = a plastoquinol + NAD(+) + n H(+)(out). It carries out the reaction a plastoquinone + NADPH + (n+1) H(+)(in) = a plastoquinol + NADP(+) + n H(+)(out). In terms of biological role, NDH shuttles electrons from NAD(P)H:plastoquinone, via FMN and iron-sulfur (Fe-S) centers, to quinones in the photosynthetic chain and possibly in a chloroplast respiratory chain. The immediate electron acceptor for the enzyme in this species is believed to be plastoquinone. Couples the redox reaction to proton translocation, and thus conserves the redox energy in a proton gradient. The polypeptide is NAD(P)H-quinone oxidoreductase subunit I, chloroplastic (Lactuca sativa (Garden lettuce)).